Consider the following 766-residue polypeptide: Coenzyme PQQ synthesis protein F (766 aa).

Histidine 49 is a Zn(2+) binding site. Glutamate 52 (proton acceptor) is an active-site residue. Zn(2+) contacts are provided by histidine 53 and glutamate 130.

It belongs to the peptidase M16 family. Requires Zn(2+) as cofactor.

The protein operates within cofactor biosynthesis; pyrroloquinoline quinone biosynthesis. In terms of biological role, required for coenzyme pyrroloquinoline quinone (PQQ) biosynthesis. It is thought that this protein is a protease that cleaves peptides bond in a small peptide (gene pqqA), providing the glutamate and tyrosine residues which are necessary for the synthesis of PQQ. The chain is Coenzyme PQQ synthesis protein F (pqqF) from Pseudomonas putida (strain ATCC 47054 / DSM 6125 / CFBP 8728 / NCIMB 11950 / KT2440).